The following is a 77-amino-acid chain: Defensin-like protein 159 (77 aa).

The N-terminal stretch at 1–27 is a signal peptide; it reads MAKLSCSYFLVLILVFSAFLMVERAEG. 4 cysteine pairs are disulfide-bonded: C30/C77, C40/C59, C45/C71, and C49/C73.

This sequence belongs to the DEFL family.

It is found in the secreted. The polypeptide is Defensin-like protein 159 (LCR25) (Arabidopsis thaliana (Mouse-ear cress)).